The chain runs to 377 residues: NAC domain-containing protein 76 (377 aa).

One can recognise an NAC domain in the interval 10 to 159; that stretch reads VPPGFRFHPT…GWVVCRAFKK (150 aa). The DNA-binding element occupies 110 to 165; that stretch reads IGMRKTLVFYKGRAPNGQKTDWIMHEYRLESDENAPPQEEGWVVCRAFKKKPMTGQ. Residues 312-347 are disordered; the sequence is GVSGFGGHHEEDNNKIGHYNNEESNNKGSVETASST. Over residues 318–336 the composition is skewed to basic and acidic residues; the sequence is GHHEEDNNKIGHYNNEESN. Over residues 337–347 the composition is skewed to polar residues; sequence NKGSVETASST.

The protein belongs to the plant vascular related NAC-domain protein family. In terms of assembly, interacts with NAC030/VND7. Detected in root protoxylem and metaxylem poles and in vessels of protoxylems, outermost metaxylems, inner metaxylems, shoots and hypocotyls. Expressed in roots, hypocotyls, cotyledons and leaves. Present in developing xylems. Specifically expressed in vessels but not in interfascicular fibers in stems.

The protein resides in the nucleus. Functionally, transcription activator that binds to the secondary wall NAC binding element (SNBE), 5'-(T/A)NN(C/T)(T/C/G)TNNNNNNNA(A/C)GN(A/C/T)(A/T)-3', in the promoter of target genes. Involved in xylem formation by promoting the expression of secondary wall-associated transcription factors and of genes involved in secondary wall biosynthesis and programmed cell death, genes driven by the secondary wall NAC binding element (SNBE). Triggers thickening of secondary walls. In Arabidopsis thaliana (Mouse-ear cress), this protein is NAC domain-containing protein 76.